The following is a 102-amino-acid chain: Small ribosomal subunit protein uS10 (102 aa).

This sequence belongs to the universal ribosomal protein uS10 family. Part of the 30S ribosomal subunit.

Its function is as follows. Involved in the binding of tRNA to the ribosomes. The sequence is that of Small ribosomal subunit protein uS10 from Pseudothermotoga lettingae (strain ATCC BAA-301 / DSM 14385 / NBRC 107922 / TMO) (Thermotoga lettingae).